We begin with the raw amino-acid sequence, 124 residues long: Tax1-binding protein 3 homolog (124 aa).

The PDZ domain occupies 18 to 106; the sequence is AVELHKQEVI…DRAVKFIKQS (89 aa).

May regulate a number of protein-protein interactions by competing for PDZ domain binding sites. The protein is Tax1-binding protein 3 homolog of Caenorhabditis elegans.